The primary structure comprises 264 residues: Neurexophilin-2 (264 aa).

Residues 1 to 22 (MRLRPLPLVVVPGLLQLLFCDS) form the signal peptide. Residues 23 to 90 (KEVVHATEGL…WDWLANITEI (68 aa)) are II. N-linked (GlcNAc...) asparagine glycans are attached at residues Asn-86, Asn-139, Asn-149, and Asn-155. The III stretch occupies residues 91–169 (QEPLARTKRR…LVPPSKVVEF (79 aa)). Residues 170–178 (EVSPQSTLE) are IV (linker domain). Residues 179–264 (TKESKSFNCR…HSETPYLSSG (86 aa)) form a v (Cys-rich) region.

This sequence belongs to the neurexophilin family. May be proteolytically processed at the boundary between the N-terminal non-conserved and the central conserved domain in neuron-like cells. As to expression, expressed in brain and kidney.

The protein resides in the secreted. Functionally, may be signaling molecules that resemble neuropeptides and that act by binding to alpha-neurexins and possibly other receptors. The sequence is that of Neurexophilin-2 (NXPH2) from Homo sapiens (Human).